A 308-amino-acid chain; its full sequence is tRNA dimethylallyltransferase (308 aa).

14–21 (GPTASGKT) is an ATP binding site. Substrate is bound at residue 16 to 21 (TASGKT). Interaction with substrate tRNA regions lie at residues 39–42 (DSAL), 163–167 (QRLAR), and 244–249 (RCVGYR).

Belongs to the IPP transferase family. Monomer. Requires Mg(2+) as cofactor.

It carries out the reaction adenosine(37) in tRNA + dimethylallyl diphosphate = N(6)-dimethylallyladenosine(37) in tRNA + diphosphate. Functionally, catalyzes the transfer of a dimethylallyl group onto the adenine at position 37 in tRNAs that read codons beginning with uridine, leading to the formation of N6-(dimethylallyl)adenosine (i(6)A). The polypeptide is tRNA dimethylallyltransferase (Shewanella piezotolerans (strain WP3 / JCM 13877)).